A 56-amino-acid chain; its full sequence is Ovomucoid (56 aa).

The region spanning 6–56 (VDCSEYPKPACTLEYRPLCGSDNKTYANKCNFCNAVVESNGTLTLSHFGKC) is the Kazal-like domain. 3 disulfide bridges follow: C8/C38, C16/C35, and C24/C56. Residue N45 is glycosylated (N-linked (GlcNAc...) asparagine).

Its subcellular location is the secreted. The protein is Ovomucoid of Callipepla californica (California quail).